The chain runs to 235 residues: Ribosome maturation factor RimM (235 aa).

Positions Met-1–Arg-19 are enriched in basic and acidic residues. Residues Met-1–Pro-49 are disordered. Positions Glu-150 to Leu-230 constitute a PRC barrel domain.

Belongs to the RimM family. As to quaternary structure, binds ribosomal protein uS19.

Its subcellular location is the cytoplasm. An accessory protein needed during the final step in the assembly of 30S ribosomal subunit, possibly for assembly of the head region. Essential for efficient processing of 16S rRNA. May be needed both before and after RbfA during the maturation of 16S rRNA. It has affinity for free ribosomal 30S subunits but not for 70S ribosomes. The polypeptide is Ribosome maturation factor RimM (Nostoc punctiforme (strain ATCC 29133 / PCC 73102)).